The following is a 937-amino-acid chain: MDIERKWRDRWRDAGIFQADPDDREKIFLTVAYPYPSGAMHIGHGRTYTVPDVYARFKRMQGYNVLFPMAWHVTGAPVIGIARRIQRKDPWTLKIYREVHRVPEDELERFSDPEYIVEYFSREYRSVMEDMGYSIDWRREFKTTDPTYSRFIQWQIRKLRDLGLVRKGAHPVKYCPECENPVGDHDLLEGEGVAINQLTLLKFKLGDSYLVAATFRPETIYGATNLWLNPDEDYVRVETGGEEWIISRAAVDNLSHQKLDLKVSGDVNPGDLIGMCVENPVTGQEHPILPASFVDPEYATGVVFSVPAHAPADFIALEDLRTDHELLERYGLEDVVADIEPVNVIAVDGYGEFPAAEVIEKFGVRNQEDPRLEDATGELYKIEHARGVMSSHIPVYGGMKVSEAREVIADELKDQGLADEMYEFAERPVICRCGGRCVVRVMEDQWFMKYSDDAWKDLAHRCLDGMKIIPEEVRANFEYYIDWLNDWACSRRIGLGTRLPWDERWIIEPLTDSTIYMAYYTIAHRLREMDAGEMDDEFFDAIFLDDSGTFEDLREEFRYWYPLDWRLSAKDLIGNHLTFHIFHHSAIFPESGWPRGAVVFGMGLLEGNKMSSSKGNVILLRDAIEKHGADVVRLFLMSSAEPWQDFDWRESEVIGTRRRIEWFREFGERVSGILDGRPVLSEVTPAEPESFIGRWMMGQLNQRIREATRALESFQTRKAVQEALYLLKKDVDHYLKRVEGRVDDEVKSVLANVLHAWIRLMAPFIPYTAEEMWERYGGEGFVAEAPWPDFSDDAESRDVQVAEEMVQNTVRDIQEIMKILGSTPERVHIYTSPKWKWDVLRVAAEVGKLDMGSIMGRVSAEGIHDNMKEVAEFVRRIIRDLGKSEVTVIDEYSVLMDASDYIESEVGARVVIHSKPDYDPENKAVNAVPLKPAIYLE.

A 'HIGH' region motif is present at residues 34–44 (PYPSGAMHIGH). The short motif at 609–613 (KMSSS) is the 'KMSKS' region element.

It belongs to the class-I aminoacyl-tRNA synthetase family.

Its subcellular location is the cytoplasm. It catalyses the reaction tRNA(Leu) + L-leucine + ATP = L-leucyl-tRNA(Leu) + AMP + diphosphate. This chain is Leucine--tRNA ligase, found in Methanothermobacter thermautotrophicus (strain ATCC 29096 / DSM 1053 / JCM 10044 / NBRC 100330 / Delta H) (Methanobacterium thermoautotrophicum).